A 347-amino-acid polypeptide reads, in one-letter code: Gibberellin 3-beta-dioxygenase 2 (347 aa).

In terms of domain architecture, Fe2OG dioxygenase spans 197–301; that stretch reads DFQGTQAVIQ…RFSMAYLWGP (105 aa). Residues His225, Asp227, and His282 each contribute to the Fe cation site. Arg292 is an active-site residue. A 2-oxoglutarate-binding site is contributed by Arg292.

The protein belongs to the iron/ascorbate-dependent oxidoreductase family. GA3OX subfamily. It depends on L-ascorbate as a cofactor. Fe(2+) is required as a cofactor. In terms of tissue distribution, highly expressed in seedlings but also expressed in roots, leaves, stems, flowers, siliques and seeds. Detected predominantly in the hypocotyl and roots of young seedlings and in the petioles and vasculature of leaves. Not expressed in the shoot apical meristem, but found in the elongation zone, the quiescent center cells and the columella cells of the root tips. Found in the cortex and the endodermis of the embryo axis in germinating seeds.

The enzyme catalyses gibberellin A20 + 2-oxoglutarate + O2 = gibberellin A1 + succinate + CO2. The protein operates within plant hormone biosynthesis; gibberellin biosynthesis. Converts the inactive gibberellin (GA) precursors GA9 and GA20 in the bioactives gibberellins GA4 and GA1. Involved in the production of bioactive GA for vegetative growth and development. The chain is Gibberellin 3-beta-dioxygenase 2 from Arabidopsis thaliana (Mouse-ear cress).